The sequence spans 406 residues: Arginine biosynthesis bifunctional protein ArgJ (406 aa).

Substrate-binding residues include threonine 154, lysine 180, threonine 191, glutamate 278, asparagine 401, and threonine 406. Threonine 191 serves as the catalytic Nucleophile.

It belongs to the ArgJ family. In terms of assembly, heterotetramer of two alpha and two beta chains.

The protein localises to the cytoplasm. The catalysed reaction is N(2)-acetyl-L-ornithine + L-glutamate = N-acetyl-L-glutamate + L-ornithine. It catalyses the reaction L-glutamate + acetyl-CoA = N-acetyl-L-glutamate + CoA + H(+). Its pathway is amino-acid biosynthesis; L-arginine biosynthesis; L-ornithine and N-acetyl-L-glutamate from L-glutamate and N(2)-acetyl-L-ornithine (cyclic): step 1/1. The protein operates within amino-acid biosynthesis; L-arginine biosynthesis; N(2)-acetyl-L-ornithine from L-glutamate: step 1/4. Catalyzes two activities which are involved in the cyclic version of arginine biosynthesis: the synthesis of N-acetylglutamate from glutamate and acetyl-CoA as the acetyl donor, and of ornithine by transacetylation between N(2)-acetylornithine and glutamate. In Gloeobacter violaceus (strain ATCC 29082 / PCC 7421), this protein is Arginine biosynthesis bifunctional protein ArgJ.